Here is a 102-residue protein sequence, read N- to C-terminus: uncharacterized protein (102 aa).

2 consecutive transmembrane segments (helical) span residues 28 to 48 (YLNLLLILEAILCPVDSLISI) and 81 to 101 (LSVLYLDLCCSGLIIAEAGIG).

The protein resides in the membrane. This is an uncharacterized protein from Saccharomyces cerevisiae (strain ATCC 204508 / S288c) (Baker's yeast).